Reading from the N-terminus, the 183-residue chain is I-kappa-B like protein N2 (183 aa).

ANK repeat units follow at residues 62–95 and 99–129; these read DGNT…DLNL and CHKP…NLEA. Positions 163-183 are disordered; that stretch reads PRQDGSSEDEVSDSEEKSDSE.

It belongs to the polydnaviridae I-Kappa-B like protein family.

In terms of biological role, suppresses the host immune response through NF-kappa-B inactivation. Possesses ankyrin repeat domains required for NF-kappa-B binding but lacks the regulatory regions required for dissociation from NF-kappa-B and degradation. Therefore, prevents host NF-kappa-B release and subsequent activation. In Microplitis demolitor (Parasitoid wasp), this protein is I-kappa-B like protein N2 (N5).